A 231-amino-acid chain; its full sequence is Uridylate kinase (231 aa).

Residue 6–9 (KLSG) participates in ATP binding. The segment at 14 to 19 (GEGGRG) is involved in allosteric activation by GTP. Positions 49 and 53 each coordinate ATP. UMP contacts are provided by residues Asp66 and 127-134 (TSNPFFTT). The ATP site is built by Thr154, Tyr160, and Asp163.

It belongs to the UMP kinase family. In terms of assembly, homohexamer.

The protein resides in the cytoplasm. It catalyses the reaction UMP + ATP = UDP + ADP. The protein operates within pyrimidine metabolism; CTP biosynthesis via de novo pathway; UDP from UMP (UMPK route): step 1/1. Its activity is regulated as follows. Allosterically activated by GTP. Inhibited by UTP. Catalyzes the reversible phosphorylation of UMP to UDP. In Thermotoga petrophila (strain ATCC BAA-488 / DSM 13995 / JCM 10881 / RKU-1), this protein is Uridylate kinase.